The sequence spans 154 residues: Transcriptional repressor NrdR (154 aa).

The tract at residues 1–22 (MECPNCHKNASRVIDSRPSDEN) is disordered. A zinc finger spans residues 3-34 (CPNCHKNASRVIDSRPSDENRAIRRRRECENC). Residues 49-139 (LLVVKNDGTR…IYRQFKDVSG (91 aa)) enclose the ATP-cone domain.

The protein belongs to the NrdR family. The cofactor is Zn(2+).

In terms of biological role, negatively regulates transcription of bacterial ribonucleotide reductase nrd genes and operons by binding to NrdR-boxes. In Lactobacillus johnsonii (strain CNCM I-12250 / La1 / NCC 533), this protein is Transcriptional repressor NrdR.